The primary structure comprises 33 residues: Dermaseptin DS VIII-like peptide (33 aa).

Position 33 is an alanine amide (A33).

As to expression, expressed by the parotoid glands.

It localises to the secreted. Functionally, possesses a potent antimicrobial activity against bacteria, fungi and protozoa. Probably acts by disturbing membrane functions with its amphipathic structure. This chain is Dermaseptin DS VIII-like peptide, found in Phyllomedusa burmeisteri (Brazilian common walking leaf frog).